Here is a 118-residue protein sequence, read N- to C-terminus: MPRVKTGVVRRRRHKKVLKAARGFFSGRRKHFRKAKEQLERSLVYAFRDRRQKKRDIRKLWIIRINAACRLNDINYSRFMNGLKLSGLELDRKILADMAMNDSAAFASLVATAKAALK.

The protein belongs to the bacterial ribosomal protein bL20 family.

Binds directly to 23S ribosomal RNA and is necessary for the in vitro assembly process of the 50S ribosomal subunit. It is not involved in the protein synthesizing functions of that subunit. The sequence is that of Large ribosomal subunit protein bL20 from Aliarcobacter butzleri (strain RM4018) (Arcobacter butzleri).